The chain runs to 368 residues: Isopentenyl-diphosphate delta-isomerase (368 aa).

Position 7–8 (7–8 (RK)) interacts with substrate. Residues T65, 66 to 68 (GMT), S96, and N125 each bind FMN. 96 to 98 (SQR) serves as a coordination point for substrate. Q160 provides a ligand contact to substrate. E161 provides a ligand contact to Mg(2+). Residues K193, S218, T223, 275–277 (GIR), and 296–297 (AL) each bind FMN.

This sequence belongs to the IPP isomerase type 2 family. As to quaternary structure, homooctamer. Dimer of tetramers. The cofactor is FMN. NADPH is required as a cofactor. Requires Mg(2+) as cofactor.

It localises to the cytoplasm. The catalysed reaction is isopentenyl diphosphate = dimethylallyl diphosphate. Involved in the biosynthesis of isoprenoids. Catalyzes the 1,3-allylic rearrangement of the homoallylic substrate isopentenyl (IPP) to its allylic isomer, dimethylallyl diphosphate (DMAPP). This chain is Isopentenyl-diphosphate delta-isomerase, found in Saccharolobus solfataricus (strain ATCC 35092 / DSM 1617 / JCM 11322 / P2) (Sulfolobus solfataricus).